A 218-amino-acid chain; its full sequence is N-alpha-acetyltransferase 11 (218 aa).

The interval 1–58 is interaction with NAA15; it reads MNIRNARPDDLMNMQHCNLLCLPENYQMKYYFYHGLSWPQLSYIAEDEDGKIVGYVLA. The 152-residue stretch at 1–152 folds into the N-acetyltransferase domain; that stretch reads MNIRNARPDD…DAYAMKRDLS (152 aa). The tract at residues 175 to 218 is disordered; sequence EETQGGTLPDAGEACLPKNPTSKDSGSSDSTDVQDSSEDLDSIS. Over residues 196–205 the composition is skewed to low complexity; it reads SKDSGSSDST. Residues 209–218 are compositionally biased toward acidic residues; the sequence is DSSEDLDSIS.

It belongs to the acetyltransferase family. ARD1 subfamily. As to quaternary structure, component of the N-terminal acetyltransferase A (NatA) complex composed of NAA11 and NAA15. Interacts with HIF1A.

It localises to the cytoplasm. It is found in the nucleus. It carries out the reaction N-terminal glycyl-[protein] + acetyl-CoA = N-terminal N(alpha)-acetylglycyl-[protein] + CoA + H(+). The catalysed reaction is N-terminal L-alanyl-[protein] + acetyl-CoA = N-terminal N(alpha)-acetyl-L-alanyl-[protein] + CoA + H(+). The enzyme catalyses N-terminal L-seryl-[protein] + acetyl-CoA = N-terminal N(alpha)-acetyl-L-seryl-[protein] + CoA + H(+). It catalyses the reaction N-terminal L-valyl-[protein] + acetyl-CoA = N-terminal N(alpha)-acetyl-L-valyl-[protein] + CoA + H(+). It carries out the reaction N-terminal L-cysteinyl-[protein] + acetyl-CoA = N-terminal N(alpha)-acetyl-L-cysteinyl-[protein] + CoA + H(+). The catalysed reaction is N-terminal L-threonyl-[protein] + acetyl-CoA = N-terminal N(alpha)-acetyl-L-threonyl-[protein] + CoA + H(+). Functionally, displays alpha (N-terminal) acetyltransferase activity. Proposed alternative catalytic subunit of the N-terminal acetyltransferase A (NatA) complex. This Mus musculus (Mouse) protein is N-alpha-acetyltransferase 11 (Naa11).